The sequence spans 483 residues: MKFIIKLFPEITIKSQSVRLRFIKILTTNIRNVLKHLEDDTLAIVRHWDHIELRTKDDNLGPEICDALTRIPGIHHILEVEDRSYSDMHNIFEQTLEAYRETLVGKTFCVRVKRRGKHEFSSGDVERYVGGGLNQHIESAKVNLTRPQVTVNLEVDQDKLILVKARHEGLGGFPIGTQEDVLSLISGGFDSGVSSYMLMRRGCRVHYCFFNLGGSAHEIGVKQVAHYLWNRFGSSHRVRFIAIDFEPVVGEILEKVEDGQMGVVLKRMMVRAASQVAERYGVQALVTGEALGQVSSQTLTNLRLIDNASDTLILRPLISHDKEHIINLARQIGTEDFAKTMPEYCGVISKSPTVKAVKAKIEEEESHFDFSILDRVVSEAKNVDIREIAQQSREQVVEVETVAELADTDVLLDIRAPDEQEEKPLKLDQVEVRSLPFYKLSSQFADLDQSKTYLLYCDRGVMSRLQALYLREQGYTNVKVYRP.

The 105-residue stretch at 62-166 folds into the THUMP domain; sequence PEICDALTRI…QDKLILVKAR (105 aa). ATP-binding positions include 184 to 185, Lys266, Gly288, and Gln297; that span reads LI. An intrachain disulfide couples Cys345 to Cys457. Residues 405-483 enclose the Rhodanese domain; it reads LADTDVLLDI…GYTNVKVYRP (79 aa). Residue Cys457 is the Cysteine persulfide intermediate of the active site.

This sequence belongs to the ThiI family.

Its subcellular location is the cytoplasm. It carries out the reaction [ThiI sulfur-carrier protein]-S-sulfanyl-L-cysteine + a uridine in tRNA + 2 reduced [2Fe-2S]-[ferredoxin] + ATP + H(+) = [ThiI sulfur-carrier protein]-L-cysteine + a 4-thiouridine in tRNA + 2 oxidized [2Fe-2S]-[ferredoxin] + AMP + diphosphate. It catalyses the reaction [ThiS sulfur-carrier protein]-C-terminal Gly-Gly-AMP + S-sulfanyl-L-cysteinyl-[cysteine desulfurase] + AH2 = [ThiS sulfur-carrier protein]-C-terminal-Gly-aminoethanethioate + L-cysteinyl-[cysteine desulfurase] + A + AMP + 2 H(+). It functions in the pathway cofactor biosynthesis; thiamine diphosphate biosynthesis. Catalyzes the ATP-dependent transfer of a sulfur to tRNA to produce 4-thiouridine in position 8 of tRNAs, which functions as a near-UV photosensor. Also catalyzes the transfer of sulfur to the sulfur carrier protein ThiS, forming ThiS-thiocarboxylate. This is a step in the synthesis of thiazole, in the thiamine biosynthesis pathway. The sulfur is donated as persulfide by IscS. This Yersinia pseudotuberculosis serotype O:1b (strain IP 31758) protein is tRNA sulfurtransferase.